We begin with the raw amino-acid sequence, 1343 residues long: DNA-directed RNA polymerase subunit beta (1343 aa).

It belongs to the RNA polymerase beta chain family. In terms of assembly, the RNAP catalytic core consists of 2 alpha, 1 beta, 1 beta' and 1 omega subunit. When a sigma factor is associated with the core the holoenzyme is formed, which can initiate transcription.

It carries out the reaction RNA(n) + a ribonucleoside 5'-triphosphate = RNA(n+1) + diphosphate. In terms of biological role, DNA-dependent RNA polymerase catalyzes the transcription of DNA into RNA using the four ribonucleoside triphosphates as substrates. This chain is DNA-directed RNA polymerase subunit beta, found in Shewanella sp. (strain W3-18-1).